Here is a 134-residue protein sequence, read N- to C-terminus: Probable 4-amino-4-deoxy-L-arabinose-phosphoundecaprenol flippase subunit ArnF (134 aa).

Residues 1 to 5 are Cytoplasmic-facing; the sequence is MNRRR. Residues 6–26 traverse the membrane as a helical segment; sequence GILFALASVLLVSVAQLSMRW. Residues 27–45 are Periplasmic-facing; that stretch reads SMTRLPRPDQWLSVPSVDS. Residues 46-66 form a helical membrane-spanning segment; the sequence is VALAVVLAAIFAYALSMLCWL. Over 67–77 the chain is Cytoplasmic; it reads AALRDLPLGRA. The chain crosses the membrane as a helical span at residues 78-98; that stretch reads YSLLSISYALVYLLAASLPLF. Residues 99 to 101 lie on the Periplasmic side of the membrane; that stretch reads NES. A helical membrane pass occupies residues 102 to 122; it reads FSFSKSLGVALVMLGVITINT. Over 123–134 the chain is Cytoplasmic; it reads RPARAPELRSSP.

This sequence belongs to the ArnF family. Heterodimer of ArnE and ArnF.

It is found in the cell inner membrane. It functions in the pathway bacterial outer membrane biogenesis; lipopolysaccharide biosynthesis. Translocates 4-amino-4-deoxy-L-arabinose-phosphoundecaprenol (alpha-L-Ara4N-phosphoundecaprenol) from the cytoplasmic to the periplasmic side of the inner membrane. The protein is Probable 4-amino-4-deoxy-L-arabinose-phosphoundecaprenol flippase subunit ArnF of Pseudomonas fluorescens (strain Pf0-1).